The chain runs to 76 residues: UPF0248 protein MMP0286 (76 aa).

The protein belongs to the UPF0248 family.

The sequence is that of UPF0248 protein MMP0286 from Methanococcus maripaludis (strain DSM 14266 / JCM 13030 / NBRC 101832 / S2 / LL).